The primary structure comprises 794 residues: uncharacterized protein (794 aa).

The first 22 residues, 1–22 (MKFKYGAIVFSGLLGVSAILAA), serve as a signal peptide directing secretion. Cys-23 is lipidated: N-palmitoyl cysteine. Cys-23 carries the S-diacylglycerol cysteine lipid modification. 2 stretches are compositionally biased toward polar residues: residues 182–200 (TSVQ…NNGV) and 245–261 (QMST…DANQ). Disordered regions lie at residues 182-208 (TSVQ…KIDK), 222-261 (NKAK…DANQ), 474-529 (FKIK…GKNG), 566-594 (SAAK…TEQK), and 737-757 (KNEK…RGKQ). The span at 475 to 501 (KIKSSNKSKSSSSKSSTKAETGKTSGG) shows a compositional bias: low complexity. The segment covering 511 to 526 (GAQNQGKKGEGAQNQG) has biased composition (polar residues). Basic and acidic residues predominate over residues 567 to 576 (AAKKEDKKSG). A compositionally biased stretch (polar residues) spans 577 to 593 (ESTTEQTQIQSKSVTEQ). A compositionally biased stretch (basic and acidic residues) spans 737 to 751 (KNEKKEGSDQKDSKS).

The protein belongs to the MG185/MG260 family.

The protein resides in the cell membrane. This is an uncharacterized protein from Mycoplasma pneumoniae (strain ATCC 29342 / M129 / Subtype 1) (Mycoplasmoides pneumoniae).